Consider the following 207-residue polypeptide: Peptidyl-prolyl cis-trans isomerase FKBP16-1, chloroplastic (207 aa).

The 104-residue stretch at 104 to 207 (GDLVELNYVC…VFEIQLLKVL (104 aa)) folds into the PPIase FKBP-type domain.

It belongs to the FKBP-type PPIase family.

The protein localises to the plastid. It is found in the chloroplast thylakoid lumen. The catalysed reaction is [protein]-peptidylproline (omega=180) = [protein]-peptidylproline (omega=0). Functionally, PPIases accelerate the folding of proteins. It catalyzes the cis-trans isomerization of proline imidic peptide bonds in oligopeptides. This chain is Peptidyl-prolyl cis-trans isomerase FKBP16-1, chloroplastic (FKBP16-1), found in Arabidopsis thaliana (Mouse-ear cress).